The sequence spans 1311 residues: Sterol regulatory element-binding protein cleavage-activating protein (1311 aa).

The Cytoplasmic portion of the chain corresponds to 1 to 18; that stretch reads MPLIDKLRERISRAFYSH. A helical membrane pass occupies residues 19–39; the sequence is GLLCASYPIPIIILTALCILA. Residues 40–277 lie on the Lumenal side of the membrane; the sequence is SCYPLLKLPL…HIVHVHFKEE (238 aa). A loop-1 region spans residues 46-282; it reads KLPLPGTGPV…HFKEEIGIAE (237 aa). N-linked (GlcNAc...) asparagine glycosylation is found at N242 and N261. The helical transmembrane segment at 278–298 threads the bilayer; sequence IGIAELIPLVTTYIILFAYIY. The 159-residue stretch at 282–440 folds into the SSD domain; sequence ELIPLVTTYI…MFFFTTVLSI (159 aa). Residues 299–310 are Cytoplasmic-facing; it reads FSTRKIDLVKSK. Residues 311–331 traverse the membrane as a helical segment; the sequence is WGLALAAVVTVLSSLLMSVGL. Residues 332 to 342 lie on the Lumenal side of the membrane; it reads CTLFGLTPTLN. A helical transmembrane segment spans residues 343-363; it reads GGEIFPYLVVVIGLENVLVLT. The Cytoplasmic portion of the chain corresponds to 364 to 399; that stretch reads KSVVSTPVDLEVKLRIAQGLRNESWFIMKNMATELG. A helical membrane pass occupies residues 400–420; sequence IILIGYFTLVPAIQEFCLFAV. V421 is a topological domain (lumenal). Residues 422–442 traverse the membrane as a helical segment; it reads GLVSDFFLQMFFFTTVLSIDI. Residues 443-512 are Cytoplasmic-facing; sequence RRMELADLNK…FFARTRLAQR (70 aa). An ER export signal motif is present at residues 445–450; it reads MELADL. Residues 513-533 form a helical membrane-spanning segment; the sequence is IIMAGTVVWIGILVYTDPAGL. Residues 529–726 are loop-7; the sequence is DPAGLRNYLT…QTPADVTLYK (198 aa). The Lumenal portion of the chain corresponds to 534 to 723; sequence RNYLTVHVTE…TENQTPADVT (190 aa). 2 N-linked (GlcNAc...) asparagine glycosylation sites follow: N583 and N651. A helical transmembrane segment spans residues 724–744; that stretch reads LYKVAALGLASGIFLVLFFFL. Residues 745-1311 lie on the Cytoplasmic side of the membrane; the sequence is LYRLLCPKNY…YVPSVLEKLD (567 aa). Positions 747–1311 are interaction with srebf; that stretch reads RLLCPKNYGQ…YVPSVLEKLD (565 aa). WD repeat units follow at residues 790 to 827, 997 to 1034, 1037 to 1076, 1109 to 1146, 1149 to 1187, 1190 to 1227, and 1230 to 1267; these read GHHM…CLTI, SFES…LRCS, DGQS…NQLQ, AHRK…CLFT, GHSG…RVSH, GHRG…KLYS, and QDLG…LLQT.

It belongs to the WD repeat SCAP family. As to quaternary structure, membrane region forms a homotetramer. Component of the SCAP-SREBP complex (composed of SCAP and srebf1/srebp1 or srebf2/srebp2). Forms a ternary complex with insig1 or insig2 through its transmembrane domains at high sterol concentrations. Interacts with the SEC23-SEC24 complex.

The protein localises to the endoplasmic reticulum membrane. It localises to the golgi apparatus membrane. It is found in the cytoplasmic vesicle. Its subcellular location is the COPII-coated vesicle membrane. Escort protein required for cholesterol as well as lipid homeostasis. Regulates export of the SCAP-SREBP complex from the endoplasmic reticulum to the Golgi upon low cholesterol, thereby regulating the processing of sterol regulatory element-binding proteins (SREBPs) SREBF1/SREBP1 and SREBF2/SREBP2. At high sterol concentrations, formation of a ternary complex with INSIG (INSIG1 or INSIG2) leads to mask the ER export signal in SCAP, promoting retention of the complex in the endoplasmic reticulum. Low sterol concentrations trigger release of INSIG, a conformational change in the SSD domain of SCAP, unmasking of the ER export signal, promoting recruitment into COPII-coated vesicles and transport of the SCAP-SREBP to the Golgi: in the Golgi, SREBPs are then processed, releasing the transcription factor fragment of SREBPs from the membrane, its import into the nucleus and up-regulation of LDLR, INSIG1 and the mevalonate pathway. Binds cholesterol via its SSD domain. The protein is Sterol regulatory element-binding protein cleavage-activating protein of Xenopus laevis (African clawed frog).